The sequence spans 317 residues: Putative peptide import ATP-binding protein BruAb2_0797 (317 aa).

One can recognise an ABC transporter domain in the interval 7-250 (LSVRGLAKHY…PQHPYTRALL (244 aa)). ATP is bound at residue 43–50 (GESGSGKT).

Belongs to the ABC transporter superfamily. The complex is composed of two ATP-binding proteins (BruAb2_0796 and BruAb2_0797), two transmembrane proteins (BruAb2_0794) and a solute-binding protein (BruAb2_0792).

Its subcellular location is the cell inner membrane. Functionally, probably part of an ABC transporter complex that could be involved in peptide import. Probably responsible for energy coupling to the transport system. The chain is Putative peptide import ATP-binding protein BruAb2_0797 from Brucella abortus biovar 1 (strain 9-941).